Consider the following 668-residue polypeptide: tRNA 5-methylaminomethyl-2-thiouridine biosynthesis bifunctional protein MnmC (668 aa).

The tract at residues 1–245 (MKHYSIQPAN…KREMLCGVME (245 aa)) is tRNA (mnm(5)s(2)U34)-methyltransferase. The segment at 270 to 668 (IGGGIASALL…LLKGKAVKAG (399 aa)) is FAD-dependent cmnm(5)s(2)U34 oxidoreductase.

The protein in the N-terminal section; belongs to the methyltransferase superfamily. tRNA (mnm(5)s(2)U34)-methyltransferase family. This sequence in the C-terminal section; belongs to the DAO family. FAD serves as cofactor.

The protein resides in the cytoplasm. The enzyme catalyses 5-aminomethyl-2-thiouridine(34) in tRNA + S-adenosyl-L-methionine = 5-methylaminomethyl-2-thiouridine(34) in tRNA + S-adenosyl-L-homocysteine + H(+). Its function is as follows. Catalyzes the last two steps in the biosynthesis of 5-methylaminomethyl-2-thiouridine (mnm(5)s(2)U) at the wobble position (U34) in tRNA. Catalyzes the FAD-dependent demodification of cmnm(5)s(2)U34 to nm(5)s(2)U34, followed by the transfer of a methyl group from S-adenosyl-L-methionine to nm(5)s(2)U34, to form mnm(5)s(2)U34. This Escherichia coli (strain K12 / DH10B) protein is tRNA 5-methylaminomethyl-2-thiouridine biosynthesis bifunctional protein MnmC.